The primary structure comprises 536 residues: Light-independent protochlorophyllide reductase subunit B (536 aa).

Aspartate 36 provides a ligand contact to [4Fe-4S] cluster. Aspartate 274 functions as the Proton donor in the catalytic mechanism. Glycine 409–leucine 410 lines the substrate pocket. The segment at aspartate 426–alanine 448 is disordered.

The protein belongs to the ChlB/BchB/BchZ family. Protochlorophyllide reductase is composed of three subunits; BchL, BchN and BchB. Forms a heterotetramer of two BchB and two BchN subunits. [4Fe-4S] cluster is required as a cofactor.

It carries out the reaction chlorophyllide a + oxidized 2[4Fe-4S]-[ferredoxin] + 2 ADP + 2 phosphate = protochlorophyllide a + reduced 2[4Fe-4S]-[ferredoxin] + 2 ATP + 2 H2O. Its pathway is porphyrin-containing compound metabolism; bacteriochlorophyll biosynthesis (light-independent). Its function is as follows. Component of the dark-operative protochlorophyllide reductase (DPOR) that uses Mg-ATP and reduced ferredoxin to reduce ring D of protochlorophyllide (Pchlide) to form chlorophyllide a (Chlide). This reaction is light-independent. The NB-protein (BchN-BchB) is the catalytic component of the complex. The protein is Light-independent protochlorophyllide reductase subunit B of Cereibacter sphaeroides (strain KD131 / KCTC 12085) (Rhodobacter sphaeroides).